The sequence spans 132 residues: uncharacterized protein (132 aa).

2 WD repeats span residues 14–53 (DLQD…LEIL) and 58–97 (AHDD…LANV).

This is an uncharacterized protein from Acanthamoeba polyphaga (Amoeba).